Here is a 216-residue protein sequence, read N- to C-terminus: Octanoyltransferase (216 aa).

A BPL/LPL catalytic domain is found at 32-207 (ENSPDELWLV…TFSQLLGYEH (176 aa)). Residues 71–78 (RGGQVTYH), 138–140 (SLG), and 151–153 (GLA) each bind substrate. The active-site Acyl-thioester intermediate is C169.

This sequence belongs to the LipB family.

Its subcellular location is the cytoplasm. The enzyme catalyses octanoyl-[ACP] + L-lysyl-[protein] = N(6)-octanoyl-L-lysyl-[protein] + holo-[ACP] + H(+). Its pathway is protein modification; protein lipoylation via endogenous pathway; protein N(6)-(lipoyl)lysine from octanoyl-[acyl-carrier-protein]: step 1/2. Its function is as follows. Catalyzes the transfer of endogenously produced octanoic acid from octanoyl-acyl-carrier-protein onto the lipoyl domains of lipoate-dependent enzymes. Lipoyl-ACP can also act as a substrate although octanoyl-ACP is likely to be the physiological substrate. The protein is Octanoyltransferase of Shewanella amazonensis (strain ATCC BAA-1098 / SB2B).